Reading from the N-terminus, the 350-residue chain is Paired box protein Pax-4 (350 aa).

The segment at residues 5–131 (GISSMNQLGG…SSINRVLRAL (127 aa)) is a DNA-binding region (paired). Residues 8-64 (SMNQLGGLFVNGRPLPLDTRQQIVRLAVSGMRPCDISRILKVSNGCVSKILGRYYRT) form a PAI subdomain region. The interval 83-131 (PVVARIAQLKGECPALFAWEIQRQLCAEGLCTQDKTPSVSSINRVLRAL) is RED subdomain. Residues 153-172 (LTPHSGSETPRGTHPGTGHR) form a disordered region. The homeobox DNA-binding region spans 170-229 (GHRNRTIFSPSQAEALEKEFQRGQYPDSVARGKLATATSLPEDTVRVWFSNRRAKWRRQE). Residues 278 to 350 (CYQLCWATAP…ATPTHFSHWP (73 aa)) are transcription repression.

The protein belongs to the paired homeobox family.

Its subcellular location is the nucleus. In terms of biological role, plays an important role in the differentiation and development of pancreatic islet beta cells. Transcriptional repressor that binds to a common element in the glucagon, insulin and somatostatin promoters. Competes with PAX6 for this same promoter binding site. Isoform 2 appears to be a dominant negative form antagonizing PAX4 transcriptional activity. The polypeptide is Paired box protein Pax-4 (PAX4) (Homo sapiens (Human)).